Here is a 1434-residue protein sequence, read N- to C-terminus: Inositol hexakisphosphate and diphosphoinositol-pentakisphosphate kinase 1 (1434 aa).

Position 66 to 67 (66 to 67) interacts with substrate; the sequence is KK. ATP contacts are provided by residues Arg147, Lys200, His207, Arg226, 250-253, and 259-261; these read EEFM and DVK. Position 226–227 (226–227) interacts with substrate; sequence RK. Substrate contacts are provided by Lys261 and Arg275. Residues Ser277, Asp322, and 334–336 contribute to the ATP site; that span reads DVN. 339–342 is a binding site for substrate; it reads SFVK. The segment at 384–455 is polyphosphoinositide-binding domain; it reads PTTSGTMMEL…VLDITRLLLA (72 aa). Positions 916-1017 are disordered; it reads EGSAPAGCGF…PTEMKQSGLG (102 aa). Phosphoserine occurs at positions 941 and 984. A compositionally biased stretch (polar residues) spans 1002–1017; that stretch reads FSSSRPPTEMKQSGLG. Phosphoserine occurs at positions 1034, 1070, 1142, and 1149. 3 disordered regions span residues 1133 to 1193, 1228 to 1251, and 1396 to 1434; these read NHQA…GFSD, ESTQ…DTEV, and TDNP…EDIS. Over residues 1165–1183 the composition is skewed to low complexity; sequence SSGPSSTVSSAGPSSPTTV. The segment covering 1403-1434 has biased composition (acidic residues); sequence LSEETDLQAQEVSEEIDQEPEVVDELSNEDIS.

The protein belongs to the histidine acid phosphatase family. VIP1 subfamily.

Its subcellular location is the cytoplasm. The protein localises to the cytosol. It is found in the cell membrane. The catalysed reaction is 1D-myo-inositol hexakisphosphate + ATP = 1-diphospho-1D-myo-inositol 2,3,4,5,6-pentakisphosphate + ADP. It catalyses the reaction 5-diphospho-1D-myo-inositol 1,2,3,4,6-pentakisphosphate + ATP + H(+) = 1,5-bis(diphospho)-1D-myo-inositol 2,3,4,6-tetrakisphosphate + ADP. In terms of biological role, bifunctional inositol kinase that acts in concert with the IP6K kinases IP6K1, IP6K2 and IP6K3 to synthesize the diphosphate group-containing inositol pyrophosphates diphosphoinositol pentakisphosphate, PP-InsP5, and bis-diphosphoinositol tetrakisphosphate, (PP)2-InsP4. PP-InsP5 and (PP)2-InsP4, also respectively called InsP7 and InsP8, regulate a variety of cellular processes, including apoptosis, vesicle trafficking, cytoskeletal dynamics, exocytosis, insulin signaling and neutrophil activation. Phosphorylates inositol hexakisphosphate (InsP6) at position 1 to produce PP-InsP5 which is in turn phosphorylated by IP6Ks to produce (PP)2-InsP4. Alternatively, phosphorylates PP-InsP5 at position 1, produced by IP6Ks from InsP6, to produce (PP)2-InsP4. Activated when cells are exposed to hyperosmotic stress. This chain is Inositol hexakisphosphate and diphosphoinositol-pentakisphosphate kinase 1, found in Rattus norvegicus (Rat).